Reading from the N-terminus, the 749-residue chain is Chitin synthase G (749 aa).

The next 5 membrane-spanning stretches (helical) occupy residues Cys40–Pro60, Val73–Cys93, Phe421–Ile441, Pro451–Ile471, and Leu483–Ala503. The interval Ile683–Val749 is disordered. Positions Leu697–Gln718 are enriched in polar residues. N-linked (GlcNAc...) asparagine glycosylation is present at Asn715. The segment covering Tyr728 to Tyr742 has biased composition (basic residues).

The protein belongs to the chitin synthase family. Class VI subfamily.

The protein resides in the cell membrane. The catalysed reaction is [(1-&gt;4)-N-acetyl-beta-D-glucosaminyl](n) + UDP-N-acetyl-alpha-D-glucosamine = [(1-&gt;4)-N-acetyl-beta-D-glucosaminyl](n+1) + UDP + H(+). Polymerizes chitin, a structural polymer of the cell wall and septum, by transferring the sugar moiety of UDP-GlcNAc to the non-reducing end of the growing chitin polymer. Plays an important role in septal growth or maintenance. Mediates colony spore formation. The chain is Chitin synthase G from Aspergillus niger (strain ATCC MYA-4892 / CBS 513.88 / FGSC A1513).